The chain runs to 257 residues: Myosin-8 (257 aa).

Residues 1 to 257 are a coiled coil; it reads RAALQAEIEE…REVHTKISAE (257 aa). Phosphoserine occurs at positions 33, 45, and 58.

As to quaternary structure, muscle myosin is a hexameric protein that consists of 2 heavy chain subunits (MHC), 2 alkali light chain subunits (MLC) and 2 regulatory light chain subunits (MLC-2).

The protein resides in the cytoplasm. Its subcellular location is the myofibril. Muscle contraction. The protein is Myosin-8 (Myh8) of Rattus norvegicus (Rat).